The following is a 63-amino-acid chain: ORF6 protein (63 aa).

Belongs to the coronaviruses accessory protein 6 family.

The protein resides in the host endoplasmic reticulum membrane. It is found in the host Golgi apparatus membrane. Its function is as follows. Could be a determinant of virus virulence. Seems to stimulate cellular DNA synthesis in vitro. The sequence is that of ORF6 protein from Rhinolophus macrotis (Big-eared horseshoe bat).